The chain runs to 393 residues: Tryptophan synthase beta chain (393 aa).

Lys-86 is modified (N6-(pyridoxal phosphate)lysine).

Belongs to the TrpB family. As to quaternary structure, tetramer of two alpha and two beta chains. It depends on pyridoxal 5'-phosphate as a cofactor.

The catalysed reaction is (1S,2R)-1-C-(indol-3-yl)glycerol 3-phosphate + L-serine = D-glyceraldehyde 3-phosphate + L-tryptophan + H2O. The protein operates within amino-acid biosynthesis; L-tryptophan biosynthesis; L-tryptophan from chorismate: step 5/5. Its function is as follows. The beta subunit is responsible for the synthesis of L-tryptophan from indole and L-serine. The chain is Tryptophan synthase beta chain from Alteromonas mediterranea (strain DSM 17117 / CIP 110805 / LMG 28347 / Deep ecotype).